Consider the following 297-residue polypeptide: Ribosomal RNA small subunit methyltransferase H (297 aa).

S-adenosyl-L-methionine-binding positions include 37–39 (GGH), Asp-56, Phe-87, Asp-102, and His-109.

The protein belongs to the methyltransferase superfamily. RsmH family.

Its subcellular location is the cytoplasm. The enzyme catalyses cytidine(1402) in 16S rRNA + S-adenosyl-L-methionine = N(4)-methylcytidine(1402) in 16S rRNA + S-adenosyl-L-homocysteine + H(+). Specifically methylates the N4 position of cytidine in position 1402 (C1402) of 16S rRNA. The polypeptide is Ribosomal RNA small subunit methyltransferase H (Borrelia turicatae (strain 91E135)).